Reading from the N-terminus, the 149-residue chain is Nucleoside diphosphate kinase (149 aa).

ATP-binding residues include K9, F57, R85, T91, R102, and N112. The active-site Pros-phosphohistidine intermediate is H115.

This sequence belongs to the NDK family. As to quaternary structure, homotetramer. Mg(2+) serves as cofactor.

It localises to the cytoplasm. The catalysed reaction is a 2'-deoxyribonucleoside 5'-diphosphate + ATP = a 2'-deoxyribonucleoside 5'-triphosphate + ADP. It carries out the reaction a ribonucleoside 5'-diphosphate + ATP = a ribonucleoside 5'-triphosphate + ADP. Major role in the synthesis of nucleoside triphosphates other than ATP. The ATP gamma phosphate is transferred to the NDP beta phosphate via a ping-pong mechanism, using a phosphorylated active-site intermediate. In Trichodesmium erythraeum (strain IMS101), this protein is Nucleoside diphosphate kinase.